The primary structure comprises 210 residues: Prolactin-2 (210 aa).

An N-terminal signal peptide occupies residues 1 to 23 (MARRSQGTKLHLAVLCLVVSCHA). Cystine bridges form between Cys69-Cys183 and Cys200-Cys210.

It belongs to the somatotropin/prolactin family.

It is found in the secreted. The chain is Prolactin-2 (prl2) from Oncorhynchus tshawytscha (Chinook salmon).